A 154-amino-acid polypeptide reads, in one-letter code: 2S sulfur-rich seed storage protein 2 (154 aa).

The signal sequence occupies residues 1–22 (MAKMSVVAAALLALLVLGQATA). The tract at residues 29 to 52 (TTLEEEQEENPRGRSEQQCREQME) is disordered. Basic and acidic residues predominate over residues 37–52 (ENPRGRSEQQCREQME). Disulfide bonds link Cys47/Cys101, Cys60/Cys90, Cys91/Cys138, and Cys103/Cys145. Residues 72-76 (PYQNP) constitute a propeptide that is removed on maturation. Positions 151–154 (TAWL) are excised as a propeptide.

It belongs to the 2S seed storage albumins family. In terms of assembly, the mature protein consists of a small and a large chain linked by disulfide bonds.

This is a 2S seed storage protein. The polypeptide is 2S sulfur-rich seed storage protein 2 (BE2S2) (Bertholletia excelsa (Brazil nut)).